We begin with the raw amino-acid sequence, 606 residues long: Lysosomal cobalamin transporter ABCD4 (606 aa).

Residues 39–332 (NALMFLTLLC…CFTQLIDLST (294 aa)) enclose the ABC transmembrane type-1 domain. 5 helical membrane-spanning segments follow: residues 43–63 (FLTLLCLTLLEQFVIYQVGLI), 76–96 (LEGFKTLTFLAVMLIVLNSTL), 190–210 (IFGYFILGTVVNKTLMGPIVM), 279–299 (YLGSILSYVVIAIPIFSGVYG), and 314–334 (AFVCIYLISCFTQLIDLSTTL). Positions 389 to 603 (LERVSISAPS…GGGRWELMRI (215 aa)) constitute an ABC transporter domain. 421 to 428 (GNTGTGKT) contributes to the ATP binding site.

This sequence belongs to the ABC transporter superfamily. ABCD family. Peroxisomal fatty acyl CoA transporter (TC 3.A.1.203) subfamily. As to quaternary structure, homodimer or heterodimer. Interacts with LMBRD1; this interaction induces the translocation of ABCD4 from the ER to the lysosome membrane. Interacts with LMBRD1 and MMACHC; this interaction ensures the transport of cobalamin from the lysosome to the cytosol. As to expression, ubiquitous.

It localises to the endoplasmic reticulum membrane. The protein localises to the lysosome membrane. The enzyme catalyses an R-cob(III)alamin(out) + ATP + H2O = an R-cob(III)alamin(in) + ADP + phosphate + H(+). Lysosomal membrane protein that transports cobalamin (Vitamin B12) from the lysosomal lumen to the cytosol in an ATP-dependent manner. Targeted by LMBRD1 lysosomal chaperone from the endoplasmic reticulum to the lysosomal membrane. Then forms a complex with lysosomal chaperone LMBRD1 and cytosolic MMACHC to transport cobalamin across the lysosomal membrane. The protein is Lysosomal cobalamin transporter ABCD4 of Homo sapiens (Human).